We begin with the raw amino-acid sequence, 340 residues long: Nuclear hormone receptor family member nhr-268 (340 aa).

The nuclear receptor DNA-binding region spans 1-75 (MNCLVCSARA…IGMKAASKND (75 aa)). 2 consecutive NR C4-type zinc fingers follow at residues 3–23 (CLVC…CFAC) and 39–58 (CKYF…CRAC). The NR LBD domain maps to 98-337 (KNDKNYSNFI…KRLMQDIFSH (240 aa)).

Belongs to the nuclear hormone receptor family.

It localises to the nucleus. Orphan nuclear receptor. The sequence is that of Nuclear hormone receptor family member nhr-268 (nhr-268) from Caenorhabditis elegans.